The chain runs to 443 residues: D-serine dehydratase (443 aa).

An N6-(pyridoxal phosphate)lysine modification is found at K118.

It belongs to the serine/threonine dehydratase family. DsdA subfamily. As to quaternary structure, monomer. The cofactor is pyridoxal 5'-phosphate.

The enzyme catalyses D-serine = pyruvate + NH4(+). The chain is D-serine dehydratase from Escherichia coli O17:K52:H18 (strain UMN026 / ExPEC).